We begin with the raw amino-acid sequence, 305 residues long: uncharacterized protein (305 aa).

The interval 267–287 (ADEQEKNWNGGAKKNARAEPA) is disordered.

It belongs to the DnaB/DnaD family.

This is an uncharacterized protein from Listeria innocua serovar 6a (strain ATCC BAA-680 / CLIP 11262).